A 100-amino-acid polypeptide reads, in one-letter code: Urease subunit gamma (100 aa).

This sequence belongs to the urease gamma subunit family. In terms of assembly, heterotrimer of UreA (gamma), UreB (beta) and UreC (alpha) subunits. Three heterotrimers associate to form the active enzyme.

The protein resides in the cytoplasm. The enzyme catalyses urea + 2 H2O + H(+) = hydrogencarbonate + 2 NH4(+). Its pathway is nitrogen metabolism; urea degradation; CO(2) and NH(3) from urea (urease route): step 1/1. In Pseudomonas fluorescens (strain Pf0-1), this protein is Urease subunit gamma.